A 516-amino-acid polypeptide reads, in one-letter code: tRNA-2-methylthio-N(6)-dimethylallyladenosine synthase (516 aa).

In terms of domain architecture, MTTase N-terminal spans 17–133 (RSFEVRTFGC…LPSLLSRSEH (117 aa)). Residues Cys26, Cys62, Cys96, Cys170, Cys174, and Cys177 each coordinate [4Fe-4S] cluster. One can recognise a Radical SAM core domain in the interval 156–392 (RESAYAGWVS…LALQERISTE (237 aa)). Residues 395–466 (AKLIGTEVEL…PFFLIADSGV (72 aa)) form the TRAM domain. Disordered regions lie at residues 409–438 (SGGRKNDKTQRMTGRSRDGRLVHFDPQGHV) and 492–516 (GLGLPSIGSPAQKRSETSKSSGCGC). Over residues 412–438 (RKNDKTQRMTGRSRDGRLVHFDPQGHV) the composition is skewed to basic and acidic residues.

This sequence belongs to the methylthiotransferase family. MiaB subfamily. In terms of assembly, monomer. [4Fe-4S] cluster is required as a cofactor.

It localises to the cytoplasm. It catalyses the reaction N(6)-dimethylallyladenosine(37) in tRNA + (sulfur carrier)-SH + AH2 + 2 S-adenosyl-L-methionine = 2-methylsulfanyl-N(6)-dimethylallyladenosine(37) in tRNA + (sulfur carrier)-H + 5'-deoxyadenosine + L-methionine + A + S-adenosyl-L-homocysteine + 2 H(+). In terms of biological role, catalyzes the methylthiolation of N6-(dimethylallyl)adenosine (i(6)A), leading to the formation of 2-methylthio-N6-(dimethylallyl)adenosine (ms(2)i(6)A) at position 37 in tRNAs that read codons beginning with uridine. The polypeptide is tRNA-2-methylthio-N(6)-dimethylallyladenosine synthase (Corynebacterium diphtheriae (strain ATCC 700971 / NCTC 13129 / Biotype gravis)).